The primary structure comprises 72 residues: Translation initiation factor IF-1 (72 aa).

The S1-like domain occupies 1 to 72 (MAKDDVIEVD…DKGRITFRYK (72 aa)).

Belongs to the IF-1 family. In terms of assembly, component of the 30S ribosomal translation pre-initiation complex which assembles on the 30S ribosome in the order IF-2 and IF-3, IF-1 and N-formylmethionyl-tRNA(fMet); mRNA recruitment can occur at any time during PIC assembly.

The protein resides in the cytoplasm. Functionally, one of the essential components for the initiation of protein synthesis. Stabilizes the binding of IF-2 and IF-3 on the 30S subunit to which N-formylmethionyl-tRNA(fMet) subsequently binds. Helps modulate mRNA selection, yielding the 30S pre-initiation complex (PIC). Upon addition of the 50S ribosomal subunit IF-1, IF-2 and IF-3 are released leaving the mature 70S translation initiation complex. This Nitratiruptor sp. (strain SB155-2) protein is Translation initiation factor IF-1.